Reading from the N-terminus, the 226-residue chain is UPF0758 protein SGO_1229 (226 aa).

One can recognise an MPN domain in the interval 103 to 225 (RILSSQKLAK…YYSYREETDL (123 aa)). Residues H174, H176, and D187 each coordinate Zn(2+). The short motif at 174–187 (HNHPSGATRPSRDD) is the JAMM motif element.

The protein belongs to the UPF0758 family.

In Streptococcus gordonii (strain Challis / ATCC 35105 / BCRC 15272 / CH1 / DL1 / V288), this protein is UPF0758 protein SGO_1229.